We begin with the raw amino-acid sequence, 299 residues long: ATP synthase gamma chain (299 aa).

Belongs to the ATPase gamma chain family. As to quaternary structure, F-type ATPases have 2 components, CF(1) - the catalytic core - and CF(0) - the membrane proton channel. CF(1) has five subunits: alpha(3), beta(3), gamma(1), delta(1), epsilon(1). CF(0) has three main subunits: a, b and c.

Its subcellular location is the cell inner membrane. In terms of biological role, produces ATP from ADP in the presence of a proton gradient across the membrane. The gamma chain is believed to be important in regulating ATPase activity and the flow of protons through the CF(0) complex. The sequence is that of ATP synthase gamma chain from Rhodospirillum rubrum.